Here is a 386-residue protein sequence, read N- to C-terminus: Zinc finger protein 385A (386 aa).

The Matrin-type 1 zinc-finger motif lies at 74–98 (ISCNVCQIRFNSQSQAEAHYKGNRH). Positions 88-193 (QAEAHYKGNR…ASLPGGSKEE (106 aa)) are disordered. The segment covering 103–121 (KGIEAAKTRGREPSVRESG) has biased composition (basic and acidic residues). Residues 145-351 (NGLGPAPGSP…AGSPLSLRPA (207 aa)) form a necessary for binding to ITPR1, CEBPA and p53/TP53 mRNAs region. Phosphoserine is present on S185. Residues 201 to 225 (LYCALCKVAVNSLSQLEAHNKGTKH) form a Matrin-type 2 zinc finger. T248 is modified (phosphothreonine). The Matrin-type 3 zinc finger occupies 261–285 (FHCEICNVKVNSEVQLKQHISSRRH). The segment at 279-305 (HISSRRHRDGVAGKPNPLLSRHKKPRG) is disordered.

In terms of assembly, interacts with p53/TP53; the interaction is direct and enhances p53/TP53 transactivation functions on cell-cycle arrest target genes, resulting in growth arrest. Interacts with ELAVL1; the interaction is indirect, mRNA-dependent and may regulate p53/TP53 expression. In terms of processing, ubiquitinated upon prolonged exposure to genotoxic stress, which leads to proteasomal degradation of ZNF385A and releases p53/TP53 from cell-cycle arrest target gene promoters. In terms of tissue distribution, expressed in brain and testis (at protein level). In brain, the expression is located to olfactory bulb, cerebral cortex, hippocampus, satellite cells and Purkinje cells of the cerebellum molecular layer. Detected in bone marrow, white and brown adipose tissue, lung and at lower levels in the thymus.

It is found in the cytoplasm. The protein resides in the nucleus. It localises to the nucleolus. Its subcellular location is the cell projection. The protein localises to the dendrite. Its function is as follows. RNA-binding protein that affects the localization and the translation of a subset of mRNA. May play a role in adipogenesis through binding to the 3'-UTR of CEBPA mRNA and regulation of its translation. Targets ITPR1 mRNA to dendrites in Purkinje cells, and may regulate its activity-dependent translation. With ELAVL1, binds the 3'-UTR of p53/TP53 mRNAs to control their nuclear export induced by CDKN2A. Hence, may regulate p53/TP53 expression and mediate in part the CDKN2A anti-proliferative activity. May also bind CCNB1 mRNA. Alternatively, may also regulate p53/TP53 activity through direct protein-protein interaction. Interacts with p53/TP53 and promotes cell-cycle arrest over apoptosis enhancing preferentially the DNA binding and transactivation of p53/TP53 on cell-cycle arrest target genes over proapoptotic target genes. May also regulate the ubiquitination and stability of CDKN1A promoting DNA damage-induced cell cycle arrest. Also plays a role in megakaryocytes differentiation. The chain is Zinc finger protein 385A (Znf385a) from Mus musculus (Mouse).